Consider the following 116-residue polypeptide: Ribosome-binding factor A (116 aa).

It belongs to the RbfA family. As to quaternary structure, monomer. Binds 30S ribosomal subunits, but not 50S ribosomal subunits or 70S ribosomes.

The protein resides in the cytoplasm. Its function is as follows. One of several proteins that assist in the late maturation steps of the functional core of the 30S ribosomal subunit. Associates with free 30S ribosomal subunits (but not with 30S subunits that are part of 70S ribosomes or polysomes). Required for efficient processing of 16S rRNA. May interact with the 5'-terminal helix region of 16S rRNA. The polypeptide is Ribosome-binding factor A (Streptococcus pneumoniae serotype 4 (strain ATCC BAA-334 / TIGR4)).